Reading from the N-terminus, the 663-residue chain is ATP-dependent zinc metalloprotease FtsH (663 aa).

Residues 1-12 are Stromal-facing; it reads MNKKETNTSWWR. The chain crosses the membrane as a helical span at residues 13 to 33; the sequence is IILISLGISIICILAAFLAMK. At 34–135 the chain is on the lumenal side; that stretch reads DGFFVLENNT…HPPKLDIFKT (102 aa). The chain crosses the membrane as a helical span at residues 136–156; sequence ISDTLGSLIVPGLVVAVFYLF. The Stromal segment spans residues 157 to 663; sequence LERANNNNNN…KIYESKFPKK (507 aa). The segment at 165–184 is disordered; that stretch reads NNNSNGSPFGPGGGPNQNMR. ATP is bound at residue 244–251; that stretch reads GPPGTGKT. Histidine 465 is a binding site for Zn(2+). The active site involves glutamate 466. Residues histidine 469 and aspartate 543 each contribute to the Zn(2+) site.

It in the central section; belongs to the AAA ATPase family. In the C-terminal section; belongs to the peptidase M41 family. As to quaternary structure, homohexamer. Zn(2+) serves as cofactor.

Its subcellular location is the plastid. It is found in the chloroplast thylakoid membrane. Acts as a processive, ATP-dependent zinc metallopeptidase. In Heterosigma akashiwo (strain NIES-293 / 8280G21-1), this protein is ATP-dependent zinc metalloprotease FtsH.